The sequence spans 362 residues: Isopentenyl-diphosphate delta-isomerase (362 aa).

6-7 contacts substrate; that stretch reads RK. Residues 65-67, S95, and N124 each bind FMN; that span reads SIT. 95 to 97 contacts substrate; the sequence is SQR. Q158 is a substrate binding site. Position 159 (E159) interacts with Mg(2+). FMN-binding positions include K189, T219, 269–271, and 290–291; these read GVR and AL.

The protein belongs to the IPP isomerase type 2 family. Homooctamer. Dimer of tetramers. It depends on FMN as a cofactor. NADPH is required as a cofactor. The cofactor is Mg(2+).

The protein localises to the cytoplasm. The enzyme catalyses isopentenyl diphosphate = dimethylallyl diphosphate. Functionally, involved in the biosynthesis of isoprenoids. Catalyzes the 1,3-allylic rearrangement of the homoallylic substrate isopentenyl (IPP) to its allylic isomer, dimethylallyl diphosphate (DMAPP). This chain is Isopentenyl-diphosphate delta-isomerase, found in Methanococcoides burtonii (strain DSM 6242 / NBRC 107633 / OCM 468 / ACE-M).